Consider the following 410-residue polypeptide: Extracellular serine proteinase (410 aa).

A signal peptide spans 1–19 (MKRGGLWLLLGLLVLSACS). Positions 20-132 (SNPPAASTQE…IEADQEVRAF (113 aa)) are excised as a propeptide. The 86-residue stretch at 45 to 130 (YIVVYKENAD…AYIEADQEVR (86 aa)) folds into the Inhibitor I9 domain. Residues 139-410 (TWGLDRIDQR…SPNLLLYTPF (272 aa)) enclose the Peptidase S8 domain. Active-site charge relay system residues include aspartate 171, histidine 204, and serine 356.

The protein belongs to the peptidase S8 family. Contains 4 Cys residues that form two disulfide bonds. In terms of processing, glycosylated. This proteinase has a 0.7% carbohydrate content.

It is found in the secreted. Its function is as follows. Serine proteinase with preferred activity for amino acids with aromatic side groups at the P1' side of the scissible bond. The protein is Extracellular serine proteinase of Thermus sp. (strain Rt41A).